The sequence spans 505 residues: 2,3-bisphosphoglycerate-independent phosphoglycerate mutase (505 aa).

Positions 13 and 63 each coordinate Mn(2+). Residue Ser63 is the Phosphoserine intermediate of the active site. Residues His124, 153 to 154 (RD), Arg183, Arg189, 254 to 257 (RADR), and Lys329 each bind substrate. The Mn(2+) site is built by Asp395, His399, Asp436, His437, and His455.

This sequence belongs to the BPG-independent phosphoglycerate mutase family. As to quaternary structure, monomer. Mn(2+) serves as cofactor.

It carries out the reaction (2R)-2-phosphoglycerate = (2R)-3-phosphoglycerate. Its pathway is carbohydrate degradation; glycolysis; pyruvate from D-glyceraldehyde 3-phosphate: step 3/5. Functionally, catalyzes the interconversion of 2-phosphoglycerate and 3-phosphoglycerate. This is 2,3-bisphosphoglycerate-independent phosphoglycerate mutase from Agrobacterium fabrum (strain C58 / ATCC 33970) (Agrobacterium tumefaciens (strain C58)).